A 387-amino-acid chain; its full sequence is Xylose isomerase (387 aa).

Active-site residues include His-54 and Asp-57. Mg(2+) is bound by residues Glu-181, Glu-217, His-220, Asp-245, Asp-255, Asp-257, and Asp-287.

It belongs to the xylose isomerase family. As to quaternary structure, homotetramer. Requires Mg(2+) as cofactor.

The protein resides in the cytoplasm. It carries out the reaction alpha-D-xylose = alpha-D-xylulofuranose. The protein is Xylose isomerase of Streptomyces coelicolor (strain ATCC BAA-471 / A3(2) / M145).